A 434-amino-acid chain; its full sequence is uncharacterized protein (434 aa).

11 helical membrane passes run 50-70, 72-92, 95-115, 135-155, 158-178, 179-199, 229-249, 288-308, 319-339, 376-396, and 412-432; these read GSIAFGLSIGFVASVGISFTL, TGLLNAWLLFLPTDILGVLAI, LMAFGLGAIWGVLILTCLLPV, SPVVSAFALFPLVAIFYQFGW, SLIAAVVVLMTRVVVVRYFPH, LNPESIEIFIGMVMLLGIAIT, LPYIAIVGALIAAVASMKIFA, GFVPLIATTALATGVYAVAGF, PNPMVAAVLGAVVISAEVLLL, IFAAIKMAGYTGFSIAVAIYF, and VVAVMITGILLNVLYWLGLFV.

It localises to the cell membrane. This is an uncharacterized protein from Escherichia coli (strain K12).